A 271-amino-acid chain; its full sequence is OX-2 membrane glycoprotein homolog (271 aa).

The N-terminal stretch at 1–24 (MSSLFISLPWVAFIWLALLGAVGG) is a signal peptide. At 25 to 227 (ARVQGPMRGS…QGPLAHDLPA (203 aa)) the chain is on the extracellular side. The 104-residue stretch at 26 to 129 (RVQGPMRGSA…SCTACLEVTS (104 aa)) folds into the Ig-like V-type domain. Cysteine 39 and cysteine 109 form a disulfide bridge. Residues asparagine 83, asparagine 91, asparagine 138, asparagine 157, asparagine 166, and asparagine 208 are each glycosylated (N-linked (GlcNAc...) asparagine; by host). Positions 130–220 (PPTGHVQVNS…ISIPASIQGP (91 aa)) constitute an Ig-like C2-type domain. The cysteines at positions 148 and 202 are disulfide-linked. The helical transmembrane segment at 228–248 (AQGTLAGVAITLVGLFGIFAL) threads the bilayer. Residues 249–271 (HHCRRKQGGASPTSDDMDPLSTQ) are Cytoplasmic-facing.

Interacts with human CD200R1. In terms of processing, N-glycosylated.

It localises to the host cell membrane. In terms of biological role, dramatically stimulates primary monocytes, macrophages, and dendritic cells to produce the inflammatory cytokines interleukin 1-beta, IL-6, monocyte chemoattractant protein 1, and TNF-alpha. The induction of inflammatory cytokine production potentially promotes the cytokine-mediated angiogenic proliferation of KSHV-infected cells. In Human herpesvirus 8 type P (isolate GK18) (HHV-8), this protein is OX-2 membrane glycoprotein homolog (K14).